Consider the following 122-residue polypeptide: Small ribosomal subunit protein uS13 (122 aa).

Positions 97 to 122 are disordered; it reads PVRGQRTHTNARTRKGPAKAIAGKKK.

The protein belongs to the universal ribosomal protein uS13 family. In terms of assembly, part of the 30S ribosomal subunit. Forms a loose heterodimer with protein S19. Forms two bridges to the 50S subunit in the 70S ribosome.

In terms of biological role, located at the top of the head of the 30S subunit, it contacts several helices of the 16S rRNA. In the 70S ribosome it contacts the 23S rRNA (bridge B1a) and protein L5 of the 50S subunit (bridge B1b), connecting the 2 subunits; these bridges are implicated in subunit movement. Contacts the tRNAs in the A and P-sites. The sequence is that of Small ribosomal subunit protein uS13 from Bartonella tribocorum (strain CIP 105476 / IBS 506).